Reading from the N-terminus, the 83-residue chain is Small ribosomal subunit protein bS20 (83 aa).

The interval 60–83 (ASKGLIHKNKASRDKSRLAAKLAN) is disordered.

The protein belongs to the bacterial ribosomal protein bS20 family.

Its function is as follows. Binds directly to 16S ribosomal RNA. The polypeptide is Small ribosomal subunit protein bS20 (Streptococcus thermophilus (strain CNRZ 1066)).